The primary structure comprises 106 residues: Urease subunit beta (106 aa).

This sequence belongs to the urease beta subunit family. Heterotrimer of UreA (gamma), UreB (beta) and UreC (alpha) subunits. Three heterotrimers associate to form the active enzyme.

Its subcellular location is the cytoplasm. The enzyme catalyses urea + 2 H2O + H(+) = hydrogencarbonate + 2 NH4(+). It participates in nitrogen metabolism; urea degradation; CO(2) and NH(3) from urea (urease route): step 1/1. The polypeptide is Urease subunit beta (Prochlorococcus marinus subsp. pastoris (strain CCMP1986 / NIES-2087 / MED4)).